Consider the following 227-residue polypeptide: Cytochrome c oxidase subunit 2 (227 aa).

Residues 1–26 (MATWSNLSIQDGASPLMEQLSFFHDD) lie on the Mitochondrial intermembrane side of the membrane. The chain crosses the membrane as a helical span at residues 27–48 (HTMVVLLITVIVGYALSYMLFN). The Mitochondrial matrix portion of the chain corresponds to 49–62 (AYTNRNMLHGHLIE). A helical membrane pass occupies residues 63–82 (TIWTALPAITLIFIALPSLR). At 83–227 (LLYLLDDSVD…LFIKWLSKMI (145 aa)) the chain is on the mitochondrial intermembrane side. Cu cation is bound by residues His161, Cys196, Glu198, Cys200, His204, and Met207. Glu198 serves as a coordination point for Mg(2+).

The protein belongs to the cytochrome c oxidase subunit 2 family. In terms of assembly, component of the cytochrome c oxidase (complex IV, CIV), a multisubunit enzyme composed of a catalytic core of 3 subunits and several supernumerary subunits. The complex exists as a monomer or a dimer and forms supercomplexes (SCs) in the inner mitochondrial membrane with ubiquinol-cytochrome c oxidoreductase (cytochrome b-c1 complex, complex III, CIII). Cu cation is required as a cofactor.

The protein localises to the mitochondrion inner membrane. It catalyses the reaction 4 Fe(II)-[cytochrome c] + O2 + 8 H(+)(in) = 4 Fe(III)-[cytochrome c] + 2 H2O + 4 H(+)(out). Its function is as follows. Component of the cytochrome c oxidase, the last enzyme in the mitochondrial electron transport chain which drives oxidative phosphorylation. The respiratory chain contains 3 multisubunit complexes succinate dehydrogenase (complex II, CII), ubiquinol-cytochrome c oxidoreductase (cytochrome b-c1 complex, complex III, CIII) and cytochrome c oxidase (complex IV, CIV), that cooperate to transfer electrons derived from NADH and succinate to molecular oxygen, creating an electrochemical gradient over the inner membrane that drives transmembrane transport and the ATP synthase. Cytochrome c oxidase is the component of the respiratory chain that catalyzes the reduction of oxygen to water. Electrons originating from reduced cytochrome c in the intermembrane space (IMS) are transferred via the dinuclear copper A center (CU(A)) of subunit 2 and heme A of subunit 1 to the active site in subunit 1, a binuclear center (BNC) formed by heme A3 and copper B (CU(B)). The BNC reduces molecular oxygen to 2 water molecules using 4 electrons from cytochrome c in the IMS and 4 protons from the mitochondrial matrix. In Schistocerca gregaria (Desert locust), this protein is Cytochrome c oxidase subunit 2 (COII).